The chain runs to 115 residues: Protein Diedel (115 aa).

The N-terminal stretch at 1 to 24 (MASPVVSLLLVGICALAFVHVARS) is a signal peptide. 5 disulfide bridges follow: C26-C81, C27-C87, C42-C55, C60-C71, and C76-C83.

It belongs to the Diedel family. Detected in hemolymph (at protein level). Also expressed in the fat body and is probably synthesized in the fat body and secreted into the hemolymph.

Its subcellular location is the secreted. In terms of biological role, cytokine which promotes survival following infection by Sindbis virus by suppressing the immune deficiency pathway. Following infection by the enteropathogenic bacteria E.carotovora limits intestinal stem cells proliferation. When secreted from muscle or adipose tissue, can attenuate age-related intestinal tissue degeneration by inhibiting apoptosis. The chain is Protein Diedel from Drosophila melanogaster (Fruit fly).